We begin with the raw amino-acid sequence, 134 residues long: Phosphomevalonate dehydratase small subunit (134 aa).

Ser62 serves as the catalytic Proton acceptor.

Belongs to the AcnX type II small subunit family. Heterodimer composed of a large subunit (PMDh-L) and a small subunit (PMDh-S).

It carries out the reaction (R)-5-phosphomevalonate = (2E)-3-methyl-5-phosphooxypent-2-enoate + H2O. It functions in the pathway isoprenoid biosynthesis; isopentenyl diphosphate biosynthesis via mevalonate pathway. Component of a hydro-lyase that catalyzes the dehydration of mevalonate 5-phosphate (MVA5P) to form trans-anhydromevalonate 5-phosphate (tAHMP). Involved in the archaeal mevalonate (MVA) pathway, which provides fundamental precursors for isoprenoid biosynthesis, such as isopentenyl diphosphate (IPP) and dimethylallyl diphosphate (DMAPP). This chain is Phosphomevalonate dehydratase small subunit, found in Pyrococcus furiosus (strain ATCC 43587 / DSM 3638 / JCM 8422 / Vc1).